The chain runs to 128 residues: Large ribosomal subunit protein bL20c (128 aa).

It belongs to the bacterial ribosomal protein bL20 family. As to quaternary structure, component of the chloroplast large ribosomal subunit (LSU). Mature 70S chloroplast ribosomes of higher plants consist of a small (30S) and a large (50S) subunit. The 30S small subunit contains 1 molecule of ribosomal RNA (16S rRNA) and 24 different proteins. The 50S large subunit contains 3 rRNA molecules (23S, 5S and 4.5S rRNA) and 33 different proteins.

It localises to the plastid. It is found in the chloroplast. In terms of biological role, component of the chloroplast ribosome (chloro-ribosome), a dedicated translation machinery responsible for the synthesis of chloroplast genome-encoded proteins, including proteins of the transcription and translation machinery and components of the photosynthetic apparatus. The chain is Large ribosomal subunit protein bL20c (rpl20) from Spinacia oleracea (Spinach).